The chain runs to 93 residues: DNA/RNA-binding protein Alba (93 aa).

K11 carries the N6-acetyllysine modification.

The protein belongs to the histone-like Alba family. Post-translationally, acetylated. Acetylation at Lys-11 decreases DNA-binding affinity.

Its subcellular location is the cytoplasm. The protein localises to the chromosome. Binds double-stranded DNA tightly but without sequence specificity. Involved in DNA compaction. The chain is DNA/RNA-binding protein Alba from Pyrococcus furiosus (strain ATCC 43587 / DSM 3638 / JCM 8422 / Vc1).